The following is a 263-amino-acid chain: Isoprenyl transferase (263 aa).

D38 is a catalytic residue. A Mg(2+)-binding site is contributed by D38. Residues 39–42, H55, and 83–85 contribute to the substrate site; these read GNRR and STD. Catalysis depends on N86, which acts as the Proton acceptor. Residues F87, R89, R212, and 218 to 220 contribute to the substrate site; that span reads RLS. E231 is a Mg(2+) binding site.

This sequence belongs to the UPP synthase family. In terms of assembly, homodimer. Mg(2+) serves as cofactor.

Functionally, catalyzes the condensation of isopentenyl diphosphate (IPP) with allylic pyrophosphates generating different type of terpenoids. In Thermus thermophilus (strain ATCC BAA-163 / DSM 7039 / HB27), this protein is Isoprenyl transferase.